We begin with the raw amino-acid sequence, 215 residues long: Outer-membrane lipoprotein carrier protein (215 aa).

The signal sequence occupies residues 1–24 (MFVLKARHLMAAGLVSLAAWSAGA).

The protein belongs to the LolA family. In terms of assembly, monomer.

It localises to the periplasm. In terms of biological role, participates in the translocation of lipoproteins from the inner membrane to the outer membrane. Only forms a complex with a lipoprotein if the residue after the N-terminal Cys is not an aspartate (The Asp acts as a targeting signal to indicate that the lipoprotein should stay in the inner membrane). This chain is Outer-membrane lipoprotein carrier protein, found in Ralstonia nicotianae (strain ATCC BAA-1114 / GMI1000) (Ralstonia solanacearum).